Reading from the N-terminus, the 363-residue chain is U-box domain-containing protein 62 (363 aa).

Residues 74–117 (KPIIGNPNDSGGSDGEDDVDVEEEDEDDDLDGNEGDIGMNKDAG) form a disordered region. Over residues 87–107 (DGEDDVDVEEEDEDDDLDGNE) the composition is skewed to acidic residues. In terms of domain architecture, U-box spans 181 to 253 (SLRTILSDPT…QAFCREENSQ (73 aa)). Positions 343–363 (AKAPEDPSAKATPNKMVSNWL) are disordered.

It carries out the reaction S-ubiquitinyl-[E2 ubiquitin-conjugating enzyme]-L-cysteine + [acceptor protein]-L-lysine = [E2 ubiquitin-conjugating enzyme]-L-cysteine + N(6)-ubiquitinyl-[acceptor protein]-L-lysine.. The protein operates within protein modification; protein ubiquitination. In terms of biological role, functions as an E3 ubiquitin ligase. The sequence is that of U-box domain-containing protein 62 (PUB62) from Arabidopsis thaliana (Mouse-ear cress).